The chain runs to 193 residues: Phosphatidylglycerophosphatase and protein-tyrosine phosphatase 1 (193 aa).

The N-terminal 31 residues, 1–31, are a transit peptide targeting the mitochondrion; it reads MAASAWLEAGLARVLFYPTLLYTVFRGRVRG. Positions 37–188 constitute a Tyrosine-protein phosphatase domain; that stretch reads WYHRIDHTVL…LKEFHKEITA (152 aa). K85 is subject to N6-succinyllysine. The Phosphocysteine intermediate role is filled by C132.

It belongs to the protein-tyrosine phosphatase family. Non-receptor class dual specificity subfamily. As to quaternary structure, interacts with STYXL1; the interaction inhibits PTPMT1 catalytic activity. In terms of tissue distribution, predominantly expressed in testis. Expressed at lower level in heart, brain, spleen, lung, liver, skeletal muscle, kidney, bone marrow, eye, lymph node, smooth muscle, prostate, thymus, stomach and uterus.

It localises to the mitochondrion inner membrane. The catalysed reaction is a 1,2-diacyl-sn-glycero-3-phospho-(1'-sn-glycero-3'-phosphate) + H2O = a 1,2-diacyl-sn-glycero-3-phospho-(1'-sn-glycerol) + phosphate. It catalyses the reaction O-phospho-L-tyrosyl-[protein] + H2O = L-tyrosyl-[protein] + phosphate. It carries out the reaction O-phospho-L-seryl-[protein] + H2O = L-seryl-[protein] + phosphate. The enzyme catalyses O-phospho-L-threonyl-[protein] + H2O = L-threonyl-[protein] + phosphate. The catalysed reaction is 1,2-di-(9Z-octadecenoyl)-sn-glycero-3-phospho-(1'-sn-glycerol-3'-phosphate) + H2O = 1,2-di-(9Z-octadecenoyl)-sn-glycero-3-phospho-(1'-sn-glycerol) + phosphate. It catalyses the reaction 1,2-dioctanoyl-sn-glycero-3-phospho-(1D-myo-inositol-5-phosphate) + H2O = 1,2-dioctanoyl-sn-glycero-3-phospho-(1D-myo-inositol) + phosphate. It carries out the reaction a 1-acyl-2-hexanoyl-sn-glycero-3-phospho-(1D-myo-inositol-5-phosphate) + H2O = a 1-acyl-2-hexanoyl-sn-glycero-3-phospho-(1D-myo-inositol) + phosphate. The enzyme catalyses 1,2-dibutyryl-sn-glycero-3-phospho-(1D-myo-inositol-5-phosphate) + H2O = 1,2-dibutyryl-sn-glycero-3-phospho-(1D-myo-inositol) + phosphate. Its pathway is phospholipid metabolism; phosphatidylglycerol biosynthesis; phosphatidylglycerol from CDP-diacylglycerol: step 2/2. In terms of biological role, lipid phosphatase which dephosphorylates phosphatidylglycerophosphate (PGP) to phosphatidylglycerol (PG). PGP is an essential intermediate in the biosynthetic pathway of cardiolipin, a mitochondrial-specific phospholipid regulating the membrane integrity and activities of the organelle. Has also been shown to display phosphatase activity toward phosphoprotein substrates, specifically mediates dephosphorylation of mitochondrial proteins, thereby playing an essential role in ATP production. Has probably a preference for proteins phosphorylated on Ser and/or Thr residues compared to proteins phosphorylated on Tyr residues. Probably involved in regulation of insulin secretion in pancreatic beta cells. May prevent intrinsic apoptosis, probably by regulating mitochondrial membrane integrity. The chain is Phosphatidylglycerophosphatase and protein-tyrosine phosphatase 1 from Mus musculus (Mouse).